Here is a 316-residue protein sequence, read N- to C-terminus: Ribonuclease HIII (316 aa).

One can recognise an RNase H type-2 domain in the interval 101 to 316 (QVIIGSDEVG…SNFQQIIKNK (216 aa)). D107, E108, and D211 together coordinate a divalent metal cation.

Belongs to the RNase HII family. RnhC subfamily. Mn(2+) is required as a cofactor. Mg(2+) serves as cofactor.

The protein localises to the cytoplasm. It catalyses the reaction Endonucleolytic cleavage to 5'-phosphomonoester.. Its function is as follows. Endonuclease that specifically degrades the RNA of RNA-DNA hybrids. The chain is Ribonuclease HIII (rnhC) from Ureaplasma parvum serovar 3 (strain ATCC 700970).